Reading from the N-terminus, the 177-residue chain is Probable adenylyl-sulfate kinase (177 aa).

Gly-12–Thr-19 is an ATP binding site. Catalysis depends on Ser-86, which acts as the Phosphoserine intermediate.

The protein belongs to the APS kinase family.

It carries out the reaction adenosine 5'-phosphosulfate + ATP = 3'-phosphoadenylyl sulfate + ADP + H(+). It functions in the pathway sulfur metabolism; hydrogen sulfide biosynthesis; sulfite from sulfate: step 2/3. Functionally, catalyzes the synthesis of activated sulfate. The protein is Probable adenylyl-sulfate kinase (cysC) of Synechocystis sp. (strain ATCC 27184 / PCC 6803 / Kazusa).